A 66-amino-acid polypeptide reads, in one-letter code: Large ribosomal subunit protein bL32 (66 aa).

Basic residues predominate over residues 1 to 19; that stretch reads MAIVPKRKTSKQRKHKRNT. Residues 1-21 are disordered; sequence MAIVPKRKTSKQRKHKRNTHS.

The protein belongs to the bacterial ribosomal protein bL32 family.

The protein is Large ribosomal subunit protein bL32 of Mycoplasmopsis synoviae (strain 53) (Mycoplasma synoviae).